The chain runs to 118 residues: Small ribosomal subunit protein uS13 (118 aa).

The segment at serine 94–lysine 118 is disordered.

It belongs to the universal ribosomal protein uS13 family. In terms of assembly, part of the 30S ribosomal subunit. Forms a loose heterodimer with protein S19. Forms two bridges to the 50S subunit in the 70S ribosome.

Functionally, located at the top of the head of the 30S subunit, it contacts several helices of the 16S rRNA. In the 70S ribosome it contacts the 23S rRNA (bridge B1a) and protein L5 of the 50S subunit (bridge B1b), connecting the 2 subunits; these bridges are implicated in subunit movement. Contacts the tRNAs in the A and P-sites. This chain is Small ribosomal subunit protein uS13, found in Shewanella denitrificans (strain OS217 / ATCC BAA-1090 / DSM 15013).